The sequence spans 948 residues: UvrABC system protein A (948 aa).

ATP is bound at residue 31 to 38 (GLSGSGKS). The segment at 249-277 (CPNGHDIGFTELSPRMFSFNSPYGACETC) adopts a C4-type zinc-finger fold. ABC transporter domains follow at residues 307-586 (WAGS…KNSL) and 606-934 (GNGS…QYLK). 638–645 (GVSGSGKS) is a binding site for ATP. The C4-type zinc finger occupies 737–763 (CETCEGDGILKIEMHFLPDVYVTCEVC).

Belongs to the ABC transporter superfamily. UvrA family. Forms a heterotetramer with UvrB during the search for lesions.

The protein localises to the cytoplasm. The UvrABC repair system catalyzes the recognition and processing of DNA lesions. UvrA is an ATPase and a DNA-binding protein. A damage recognition complex composed of 2 UvrA and 2 UvrB subunits scans DNA for abnormalities. When the presence of a lesion has been verified by UvrB, the UvrA molecules dissociate. This is UvrABC system protein A from Leptospira interrogans serogroup Icterohaemorrhagiae serovar copenhageni (strain Fiocruz L1-130).